The sequence spans 440 residues: Proline--tRNA ligase (440 aa).

This sequence belongs to the class-II aminoacyl-tRNA synthetase family. ProS type 2 subfamily. As to quaternary structure, homodimer.

It is found in the cytoplasm. It catalyses the reaction tRNA(Pro) + L-proline + ATP = L-prolyl-tRNA(Pro) + AMP + diphosphate. Its function is as follows. Catalyzes the attachment of proline to tRNA(Pro) in a two-step reaction: proline is first activated by ATP to form Pro-AMP and then transferred to the acceptor end of tRNA(Pro). The polypeptide is Proline--tRNA ligase (Xanthobacter autotrophicus (strain ATCC BAA-1158 / Py2)).